The chain runs to 278 residues: MVPGTGGGRDCLTLVVATALTQLLWLPGCCGSHIVGGHEVKPHARPYMASVNFEGHHHCGGFLFHAHWVLSAAHCFSDRDPSTGLVVLGAHALLTPEPTQQVFGIAAVVSHPDFEPTTQANDICLLRLNGSAVLGPAVRLLRLPRRGAKPPVAGTRCRVSGWGSVSDFEEPPPGLMEVEVRILDLSVCNSSWQGQLSPAMLCTHSGDRRRRGFCSADSGGPLVCGNRAHGLVSFSGLWCGDPKTPDVYTQVSAFVSWIWDVVRASPTPGSMGCSLRAV.

An N-terminal signal peptide occupies residues 1–31; that stretch reads MVPGTGGGRDCLTLVVATALTQLLWLPGCCG. The 230-residue stretch at 34–263 folds into the Peptidase S1 domain; the sequence is IVGGHEVKPH…FVSWIWDVVR (230 aa). C59 and C75 are oxidised to a cystine. Active-site charge relay system residues include H74 and D122. N129 carries N-linked (GlcNAc...) asparagine glycosylation. 3 cysteine pairs are disulfide-bonded: C157/C224, C188/C202, and C214/C239. Residue S218 is the Charge relay system of the active site.

It belongs to the peptidase S1 family. Post-translationally, after cleavage of the signal peptide, the N-terminus is probably further processed by CTSC. Processing by CTSC is probably required for accumulation in cytoplasmic granules; in the absence of CTSC the protein does not accumulate. In terms of processing, N-glycosylated.

The protein localises to the cytoplasmic granule lumen. It localises to the secreted. Serine protease that cleaves preferentially after Arg residues. Can also cleave after citrulline (deimidated arginine) and methylarginine residues. In Rattus norvegicus (Rat), this protein is Serine protease 57 (Prss57).